Here is a 347-residue protein sequence, read N- to C-terminus: N6-Methyl-AMP deaminase-L (347 aa).

Zn(2+) contacts are provided by His-19 and His-21. N(6)-methyl-AMP-binding positions include His-21, Asn-23, His-69, Ser-101 to Arg-104, Asp-142, and Gly-175. A Zn(2+)-binding site is contributed by His-202. N(6)-methyl-AMP contacts are provided by Glu-205, Asp-283, and Asp-284. The active-site Proton donor is Glu-205. Asp-283 contacts Zn(2+).

It belongs to the metallo-dependent hydrolases superfamily. Adenosine and AMP deaminases family. In terms of assembly, monomer. It depends on Zn(2+) as a cofactor.

It catalyses the reaction N(6)-methyl-AMP + H2O + H(+) = IMP + methylamine. In terms of biological role, catalyzes the hydrolysis of the free cytosolic methylated adenosine nucleotide N(6)-methyl-AMP (N6-mAMP) to produce inositol monophosphate (IMP) and methylamine. Is required for the catabolism of cytosolic N6-mAMP, which is derived from the degradation of mRNA containing N6-methylated adenine (m6A). In Xenopus laevis (African clawed frog), this protein is N6-Methyl-AMP deaminase-L (mapda.L).